A 633-amino-acid chain; its full sequence is Chaperone protein DnaK (633 aa).

Residue Thr-198 is modified to Phosphothreonine; by autocatalysis.

Belongs to the heat shock protein 70 family.

Acts as a chaperone. This Rhodopseudomonas palustris (strain HaA2) protein is Chaperone protein DnaK.